A 323-amino-acid chain; its full sequence is Methenyltetrahydromethanopterin cyclohydrolase (323 aa).

Belongs to the MCH family.

The protein localises to the cytoplasm. The enzyme catalyses 5,10-methenyl-5,6,7,8-tetrahydromethanopterin + H2O = N(5)-formyl-5,6,7,8-tetrahydromethanopterin + H(+). The protein operates within one-carbon metabolism; methanogenesis from CO(2); 5,10-methenyl-5,6,7,8-tetrahydromethanopterin from CO(2): step 3/3. Functionally, catalyzes the reversible interconversion of 5-formyl-H(4)MPT to methenyl-H(4)MPT(+). This is Methenyltetrahydromethanopterin cyclohydrolase from Methanococcus maripaludis (strain C5 / ATCC BAA-1333).